A 289-amino-acid chain; its full sequence is Probable prolyl 4-hydroxylase 10 (289 aa).

The helical; Signal-anchor for type II membrane protein transmembrane segment at 20–40 (LVFAVLIMSTFVILILLAFGI) threads the bilayer. Residues 41–289 (LSVPSNNAGS…KWLRVHEYKV (249 aa)) lie on the Lumenal side of the membrane. A Fe2OG dioxygenase domain is found at 161–284 (HGEGLQVLHY…KWSSTKWLRV (124 aa)). Residues His-179 and Asp-181 each coordinate Fe cation. Asn-220 is a glycosylation site (N-linked (GlcNAc...) asparagine). A Fe cation-binding site is contributed by His-265. Lys-275 is a 2-oxoglutarate binding site.

This sequence belongs to the P4HA family. Fe(2+) is required as a cofactor. The cofactor is L-ascorbate.

The protein resides in the endoplasmic reticulum membrane. The catalysed reaction is L-prolyl-[collagen] + 2-oxoglutarate + O2 = trans-4-hydroxy-L-prolyl-[collagen] + succinate + CO2. Its function is as follows. Catalyzes the post-translational formation of 4-hydroxyproline in -Xaa-Pro-Gly- sequences in proline-rich peptide sequences of plant glycoproteins and other proteins. Hydroxyprolines are important constituent of many plant cell wall glycoproteins such as extensins, hydroxyproline-rich glycoproteins, lectins and arabinogalactan proteins. The chain is Probable prolyl 4-hydroxylase 10 from Arabidopsis thaliana (Mouse-ear cress).